The chain runs to 227 residues: Lipoprotein-releasing system ATP-binding protein LolD (227 aa).

The 222-residue stretch at 6–227 (LTSQKLYKSY…LHEGSLYARE (222 aa)) folds into the ABC transporter domain. ATP is bound at residue 42–49 (GPSGSGKS).

Belongs to the ABC transporter superfamily. Lipoprotein translocase (TC 3.A.1.125) family. In terms of assembly, the complex is composed of two ATP-binding proteins (LolD) and two transmembrane proteins (LolC and LolE).

Its subcellular location is the cell inner membrane. Functionally, part of the ABC transporter complex LolCDE involved in the translocation of mature outer membrane-directed lipoproteins, from the inner membrane to the periplasmic chaperone, LolA. Responsible for the formation of the LolA-lipoprotein complex in an ATP-dependent manner. This is Lipoprotein-releasing system ATP-binding protein LolD from Legionella pneumophila (strain Lens).